Reading from the N-terminus, the 96-residue chain is YcgL domain-containing protein VS_0884 (96 aa).

The region spanning 1-84 is the YcgL domain; sequence MLCSIYKSSK…PPVNELELHK (84 aa).

The sequence is that of YcgL domain-containing protein VS_0884 from Vibrio atlanticus (strain LGP32) (Vibrio splendidus (strain Mel32)).